The following is a 329-amino-acid chain: Sex comb on midleg-like protein 1 (329 aa).

Ser138 and Ser238 each carry phosphoserine. The SAM domain occupies 258–325 (WSVEAVVLFL…YYIDRLKQGK (68 aa)).

Belongs to the SCM family.

The protein localises to the nucleus. Putative Polycomb group (PcG) protein. PcG proteins act by forming multiprotein complexes, which are required to maintain the transcriptionally repressive state of homeotic genes throughout development. May be involved in spermatogenesis during sexual maturation. This is Sex comb on midleg-like protein 1 (SCML1) from Nomascus leucogenys (Northern white-cheeked gibbon).